We begin with the raw amino-acid sequence, 2225 residues long: Multifunctional protein pyr1-3 (2225 aa).

Residue M1 is modified to N-acetylmethionine. Residues 40–390 (MVGYNESISD…NVCGEQQHKS (351 aa)) form a GATase (Glutamine amidotransferase) region. L-glutamine contacts are provided by S51, G245, and G247. One can recognise a Glutamine amidotransferase type-1 domain in the interval 196-388 (KVIVLDCGIK…VDNVCGEQQH (193 aa)). C275 acts as the Nucleophile; for GATase activity in catalysis. L-glutamine contacts are provided by Q279, N317, G319, and F320. Residues H361 and E363 each act as for GATase activity in the active site. The linker stretch occupies residues 391–405 (PMNKSKIIDCPKGIN). Positions 406 to 948 (KVLILGSGGL…TNDVNINEKS (543 aa)) are CPSase A. Positions 406 to 1461 (KVLILGSGGL…MKGPMPIENV (1056 aa)) are CPSase (Carbamoyl-phosphate synthase). ATP-binding residues include R526, R566, G572, G573, K603, E610, G636, I637, H638, Q679, and E693. ATP-grasp domains follow at residues 530–722 (AEKL…KVAL) and 1069–1260 (SRLL…KIII). Mg(2+) contacts are provided by Q679, E693, and N695. Q679, E693, and N695 together coordinate Mn(2+). The tract at residues 949 to 1461 (YITLGSGSYR…MKGPMPIENV (513 aa)) is CPSase B. 10 residues coordinate ATP: R1105, K1144, I1146, E1151, G1176, V1177, H1178, S1179, Q1219, and E1231. Positions 1219, 1231, and 1233 each coordinate Mg(2+). Mn(2+) is bound by residues Q1219, E1231, and N1233. The region spanning 1324-1470 (FKAPEKNVLL…VDWRTSNKII (147 aa)) is the MGS-like domain. A DHOase (dihydroorotase) region spans residues 1463 to 1797 (WRTSNKIIRL…VRGKVVKVVL (335 aa)). Zn(2+)-binding residues include H1479 and H1481. The (S)-dihydroorotate site is built by R1483 and N1513. Zn(2+)-binding residues include K1564, H1599, C1622, H1623, and E1646. At K1564 the chain carries N6-carboxylysine. A (S)-dihydroorotate-binding site is contributed by R1670. D1695 lines the Zn(2+) pocket. D1695 (for DHOase activity) is an active-site residue. (S)-dihydroorotate-binding residues include H1699 and P1711. Positions 1798–1916 (RGQIAFIDGK…DTLQTAFNIS (119 aa)) are linker. The tract at residues 1917–2225 (DNSLAGKHIF…LLALVFGAGV (309 aa)) is ATCase (Aspartate transcarbamylase). 2 residues coordinate carbamoyl phosphate: R1974 and T1975. Position 2002 (K2002) interacts with L-aspartate. Carbamoyl phosphate-binding residues include R2023, H2051, and Q2054. R2084 and R2145 together coordinate L-aspartate. The carbamoyl phosphate site is built by L2184 and P2185.

The protein in the N-terminal section; belongs to the CarA family. It in the 2nd section; belongs to the CarB family. This sequence in the 3rd section; belongs to the metallo-dependent hydrolases superfamily. DHOase family. CAD subfamily. In the C-terminal section; belongs to the aspartate/ornithine carbamoyltransferase superfamily. ATCase family. In terms of assembly, homohexamer. It depends on Mg(2+) as a cofactor. Mn(2+) serves as cofactor. Zn(2+) is required as a cofactor.

The protein resides in the cytoplasm. The catalysed reaction is hydrogencarbonate + L-glutamine + 2 ATP + H2O = carbamoyl phosphate + L-glutamate + 2 ADP + phosphate + 2 H(+). It carries out the reaction L-glutamine + H2O = L-glutamate + NH4(+). The enzyme catalyses hydrogencarbonate + NH4(+) + 2 ATP = carbamoyl phosphate + 2 ADP + phosphate + 2 H(+). It catalyses the reaction carbamoyl phosphate + L-aspartate = N-carbamoyl-L-aspartate + phosphate + H(+). The catalysed reaction is (S)-dihydroorotate + H2O = N-carbamoyl-L-aspartate + H(+). It participates in pyrimidine metabolism; UMP biosynthesis via de novo pathway; (S)-dihydroorotate from bicarbonate: step 1/3. It functions in the pathway pyrimidine metabolism; UMP biosynthesis via de novo pathway; (S)-dihydroorotate from bicarbonate: step 2/3. Its pathway is pyrimidine metabolism; UMP biosynthesis via de novo pathway; (S)-dihydroorotate from bicarbonate: step 3/3. Its activity is regulated as follows. Allosterically regulated and controlled by phosphorylation. 5-phosphoribose 1-diphosphate is an activator while UMP is an inhibitor of the CPSase reaction. Multifunctional protein that encodes the first 3 enzymatic activities of the de novo pyrimidine pathway: carbamoylphosphate synthetase (CPSase; EC 6.3.5.5), aspartate transcarbamylase (ATCase; EC 2.1.3.2) and dihydroorotase (DHOase; EC 3.5.2.3). The CPSase-function is accomplished in 2 steps, by a glutamine-dependent amidotransferase activity (GATase) that binds and cleaves glutamine to produce ammonia, followed by an ammonium-dependent carbamoyl phosphate synthetase, which reacts with the ammonia, hydrogencarbonate and ATP to form carbamoyl phosphate. The endogenously produced carbamoyl phosphate is sequestered and channeled to the ATCase active site. ATCase then catalyzes the formation of carbamoyl-L-aspartate from L-aspartate and carbamoyl phosphate. In the last step, DHOase catalyzes the cyclization of carbamoyl aspartate to dihydroorotate. This chain is Multifunctional protein pyr1-3 (pyr1-3), found in Dictyostelium discoideum (Social amoeba).